The sequence spans 206 residues: MKILHIDSGILGEHSVSRRLTAAIVSQIKADRPDADITYRDLASERVPHLTGAQIMAPADLEGVDPDLAADVRIGRQMLEEFLAAETVVVGAPMYNFSIPSQLKAWIDRLAVAGKTFRYSEAGAEGLAKGKKVIVASTRGGHYSVAPASAMDHQETYLRSVFGFFGITDIEFIRAEGLNLGADQKQFAIAEAEKTIAEGNVFKLAS.

Residues 15–17, 94–97, and 138–141 contribute to the FMN site; these read SVS, MYNF, and TRGG.

It belongs to the azoreductase type 1 family. Homodimer. Requires FMN as cofactor.

It carries out the reaction 2 a quinone + NADH + H(+) = 2 a 1,4-benzosemiquinone + NAD(+). It catalyses the reaction N,N-dimethyl-1,4-phenylenediamine + anthranilate + 2 NAD(+) = 2-(4-dimethylaminophenyl)diazenylbenzoate + 2 NADH + 2 H(+). Quinone reductase that provides resistance to thiol-specific stress caused by electrophilic quinones. Its function is as follows. Also exhibits azoreductase activity. Catalyzes the reductive cleavage of the azo bond in aromatic azo compounds to the corresponding amines. The sequence is that of FMN-dependent NADH:quinone oxidoreductase from Sinorhizobium medicae (strain WSM419) (Ensifer medicae).